A 570-amino-acid polypeptide reads, in one-letter code: Structure-specific endonuclease subunit EME1 (570 aa).

Positions 1–12 are enriched in low complexity; it reads MALKKSSPSLDS. Residues 1–42 form a disordered region; sequence MALKKSSPSLDSGDSDSEELPTFAFLKKEPSSTKRRQPEREE. Residues Ser12 and Ser15 each carry the phosphoserine modification. Over residues 26-42 the composition is skewed to basic and acidic residues; sequence LKKEPSSTKRRQPEREE. 3 positions are modified to phosphoserine: Ser84, Ser85, and Ser87. Lys103 participates in a covalent cross-link: Glycyl lysine isopeptide (Lys-Gly) (interchain with G-Cter in SUMO2). Phosphoserine occurs at positions 111 and 117. Residues Lys136 and Lys141 each participate in a glycyl lysine isopeptide (Lys-Gly) (interchain with G-Cter in SUMO2) cross-link. Thr150 is modified (phosphothreonine). Disordered stretches follow at residues 187–233 and 372–400; these read KTNS…ERKN and AQNP…ASIG. Positions 220–233 are enriched in basic and acidic residues; sequence RQKESTLRRQERKN. The segment at 250 to 456 is nuclease-like domain; forms the post-nick DNA binding interface and is involved in DNA recognition and bending; it reads KHIIVVLDPV…PFKKLRDETT (207 aa). Residues 476–570 form a helix-hairpin-helix (2HhH); forms the pre-nick DNA binding interface and is involved in DNA recognition and bending region; it reads RGLALVWRRQ…QPHLSLDSAD (95 aa).

The protein belongs to the EME1/MMS4 family. As to quaternary structure, part of the heterodimeric MUS81-EME1 complex.

The protein localises to the nucleus. It is found in the nucleolus. Non-catalytic subunit of the structure-specific, heterodimeric DNA endonuclease MUS81-EME1 which is involved in the maintenance of genome stability. In the complex, EME1 is required for DNA cleavage, participating in DNA recognition and bending. MUS81-EME1 cleaves 3'-flaps and nicked Holliday junctions, and exhibit limited endonuclease activity with 5' flaps and nicked double-stranded DNAs. Active during prometaphase, MUS81-EME1 resolves mitotic recombination intermediates, including Holliday junctions, which form during homologous recombination. In Homo sapiens (Human), this protein is Structure-specific endonuclease subunit EME1.